The primary structure comprises 563 residues: MSTQILASSSQNEKIHKILRPTKKFQPPVWGERFLHYNISEQELRYKQQQVEELKEVVKKEIFGESAYDVSHQLKLINVVERLGLSYHFESEIENELESIYNKSVGQNYILKDENLHDASLRFRLLRQHGFRVSSPDIFEKFKDEDGNFKECLVSDTIGLLSLYEASHLSCVGENILDEALAFTTTHLTEFLANKKEHDDPLSREISQALERPLRKSLERLAARHFISIYENETSHNKVLLQLAKLDFNLLQSIHKKELSEISRWWKESDFVLKFPFARERIVELYLWILGAYYEPQYSMARNVLTKIIAFASLADDIYDEYGTFEELELLTEAVERWDIYIIDKLNPEYLQTFYKELLNSYEEFEQELPKEETYRVHYAKERFKELLRSYLEEAWWLKEERVPSFDEYLKISLISCGYHMLIVSSLIGMKSSIVTKEVFEWLSMDRKIIRASSTICRFMDDLAEHKFEQEKNDEPTAVECYMKQYGVSEEEAYDELNKQIANAWKEINEELLKPTGVASPILVRVLNFSKFMDLFYKNGDSYTQVGKVAKDSVAALLIDPIP.

The Mg(2+) site is built by Asp-316, Asp-320, Asp-461, and Glu-469. Residues 316–320 carry the DDXXD motif motif; that stretch reads DDIYD.

It belongs to the terpene synthase family. Tpsa subfamily. Requires Mg(2+) as cofactor. The cofactor is Mn(2+). Expressed in trichomes, cones and young leaves.

It carries out the reaction (2E,6E)-farnesyl diphosphate = alpha-humulene + diphosphate. It functions in the pathway sesquiterpene biosynthesis. The protein operates within secondary metabolite biosynthesis; terpenoid biosynthesis. In terms of biological role, sesquiterpene synthase that catalyzes the formation of alpha-humulene. Can use farnesyl diphosphate (FPP) as substrate, but not geranyl diphosphate (GPP) or geranylgeranyl diphosphate (GGPP). This Humulus lupulus (European hop) protein is Alpha-humulene synthase.